The sequence spans 194 residues: Mu-like prophage FluMu protein gp37 (194 aa).

This sequence to phage Mu protein gp37.

This Haemophilus influenzae (strain ATCC 51907 / DSM 11121 / KW20 / Rd) protein is Mu-like prophage FluMu protein gp37.